The sequence spans 357 residues: MAGARSVGSLPVPNVQALAEICNDPDEHIPERYIRPEASSEEVINNYQGDMAIPIIDLKKLLCPQSSEEECVKLRSACQYWGFFLLINHGVPDEVIANLKRDIVDFFSQPLDTKKEYTQLPNSLEGYGQSFVFSEDQKLDWADMLYLHVHPSDSRDLRFWPTSPASFRQSIDAYSSETKSLALCLFEFMAKAVGAKPESLLDLFEEQPRGLRMAYYPPCRQADKVMGLSPHSDAGGLTLLLEINNVQGLQIKKDGKWFSIDAPNGALIANIGDTLEILSNGKFRSVEHRAVINPNKERISAALFHYPSENMVISPLPEFVKDGKVKYRSISYLDFMKQIFTQQLDGKNRVEVLKLDQ.

The Fe2OG dioxygenase domain maps to 207-307; it reads QPRGLRMAYY…RISAALFHYP (101 aa). Residues histidine 231, aspartate 233, and histidine 288 each coordinate Fe cation. Arginine 298 contacts 2-oxoglutarate.

This sequence belongs to the iron/ascorbate-dependent oxidoreductase family. Fe(2+) serves as cofactor. The cofactor is L-ascorbate. In terms of tissue distribution, expressed in shoots.

It is found in the cytoplasm. It catalyses the reaction melatonin + 2-oxoglutarate + O2 = 2-hydroxymelatonin + succinate + CO2. Involved in melatonin degradation. Catalyzes the hydroxylation of melatonin to produce 2-hydroxymelatonin. In Oryza sativa subsp. japonica (Rice), this protein is 2-oxoglutarate-dependent dioxygenase 11.